Reading from the N-terminus, the 314-residue chain is ATP synthase gamma chain (314 aa).

Belongs to the ATPase gamma chain family. In terms of assembly, F-type ATPases have 2 components, CF(1) - the catalytic core - and CF(0) - the membrane proton channel. CF(1) has five subunits: alpha(3), beta(3), gamma(1), delta(1), epsilon(1). CF(0) has three main subunits: a, b and c.

The protein resides in the cell membrane. Its function is as follows. Produces ATP from ADP in the presence of a proton gradient across the membrane. The gamma chain is believed to be important in regulating ATPase activity and the flow of protons through the CF(0) complex. The chain is ATP synthase gamma chain from Lactiplantibacillus plantarum (strain ATCC BAA-793 / NCIMB 8826 / WCFS1) (Lactobacillus plantarum).